Here is a 412-residue protein sequence, read N- to C-terminus: Multifunctional CCA protein (412 aa).

Gly8 and Arg11 together coordinate ATP. CTP contacts are provided by Gly8 and Arg11. Asp21 and Asp23 together coordinate Mg(2+). ATP is bound by residues Arg91, Arg137, and Arg140. CTP contacts are provided by Arg91, Arg137, and Arg140. Residues 228–329 (TGIHTLMTLS…VKLFDSIDAW (102 aa)) enclose the HD domain.

The protein belongs to the tRNA nucleotidyltransferase/poly(A) polymerase family. Bacterial CCA-adding enzyme type 1 subfamily. As to quaternary structure, monomer. Can also form homodimers and oligomers. The cofactor is Mg(2+). Ni(2+) serves as cofactor.

The enzyme catalyses a tRNA precursor + 2 CTP + ATP = a tRNA with a 3' CCA end + 3 diphosphate. It carries out the reaction a tRNA with a 3' CCA end + 2 CTP + ATP = a tRNA with a 3' CCACCA end + 3 diphosphate. Catalyzes the addition and repair of the essential 3'-terminal CCA sequence in tRNAs without using a nucleic acid template. Adds these three nucleotides in the order of C, C, and A to the tRNA nucleotide-73, using CTP and ATP as substrates and producing inorganic pyrophosphate. tRNA 3'-terminal CCA addition is required both for tRNA processing and repair. Also involved in tRNA surveillance by mediating tandem CCA addition to generate a CCACCA at the 3' terminus of unstable tRNAs. While stable tRNAs receive only 3'-terminal CCA, unstable tRNAs are marked with CCACCA and rapidly degraded. The polypeptide is Multifunctional CCA protein (Shigella dysenteriae serotype 1 (strain Sd197)).